The sequence spans 437 residues: GTPase HflX (437 aa).

Residues 150 to 173 form a disordered region; that stretch reads DRQGGGSGGGKGGGGAARGEGEKQ. Over residues 152–167 the composition is skewed to gly residues; that stretch reads QGGGSGGGKGGGGAAR. The region spanning 212–382 is the Hflx-type G domain; it reads ATAAIVGYTN…ACVEMLESRV (171 aa). Residues 218–225, 243–247, 265–268, 331–334, and 360–362 contribute to the GTP site; these read GYTNAGKS, FATLD, DTVG, NKVD, and SVK. Residues S225 and T245 each contribute to the Mg(2+) site.

Belongs to the TRAFAC class OBG-HflX-like GTPase superfamily. HflX GTPase family. Monomer. Associates with the 50S ribosomal subunit. Requires Mg(2+) as cofactor.

The protein resides in the cytoplasm. GTPase that associates with the 50S ribosomal subunit and may have a role during protein synthesis or ribosome biogenesis. The sequence is that of GTPase HflX from Akkermansia muciniphila (strain ATCC BAA-835 / DSM 22959 / JCM 33894 / BCRC 81048 / CCUG 64013 / CIP 107961 / Muc).